A 430-amino-acid chain; its full sequence is Asparagine--tRNA ligase (430 aa).

This sequence belongs to the class-II aminoacyl-tRNA synthetase family. In terms of assembly, homodimer.

It is found in the cytoplasm. The catalysed reaction is tRNA(Asn) + L-asparagine + ATP = L-asparaginyl-tRNA(Asn) + AMP + diphosphate + H(+). This is Asparagine--tRNA ligase from Geobacillus thermodenitrificans (strain NG80-2).